Reading from the N-terminus, the 284-residue chain is D-tagatose-1,6-bisphosphate aldolase subunit GatY (284 aa).

Asp-82 (proton donor) is an active-site residue. His-83 and His-180 together coordinate Zn(2+). Gly-181 serves as a coordination point for dihydroxyacetone phosphate. His-208 serves as a coordination point for Zn(2+). Dihydroxyacetone phosphate is bound by residues 209–211 (GAS) and 230–233 (NVAT).

Belongs to the class II fructose-bisphosphate aldolase family. TagBP aldolase GatY subfamily. In terms of assembly, forms a complex with GatZ. It depends on Zn(2+) as a cofactor.

It catalyses the reaction D-tagatofuranose 1,6-bisphosphate = D-glyceraldehyde 3-phosphate + dihydroxyacetone phosphate. It participates in carbohydrate metabolism; D-tagatose 6-phosphate degradation; D-glyceraldehyde 3-phosphate and glycerone phosphate from D-tagatose 6-phosphate: step 2/2. Functionally, catalytic subunit of the tagatose-1,6-bisphosphate aldolase GatYZ, which catalyzes the reversible aldol condensation of dihydroxyacetone phosphate (DHAP or glycerone-phosphate) with glyceraldehyde 3-phosphate (G3P) to produce tagatose 1,6-bisphosphate (TBP). Requires GatZ subunit for full activity and stability. Is involved in the catabolism of galactitol. This is D-tagatose-1,6-bisphosphate aldolase subunit GatY from Escherichia coli (strain SMS-3-5 / SECEC).